A 549-amino-acid polypeptide reads, in one-letter code: E-selectin (549 aa).

The N-terminal stretch at 1–21 (MNASCFLSALTFVLLIGKSIA) is a signal peptide. The C-type lectin domain maps to 22–139 (WYYNASSELM…CDKKKLALCY (118 aa)). Topologically, residues 22–494 (WYYNASSELM…CEAPANPPRP (473 aa)) are extracellular. N-linked (GlcNAc...) asparagine glycans are attached at residues Asn-25 and Asn-60. Cystine bridges form between Cys-40/Cys-138, Cys-111/Cys-130, Cys-143/Cys-154, Cys-148/Cys-163, Cys-165/Cys-174, Cys-180/Cys-225, Cys-193/Cys-206, Cys-210/Cys-238, Cys-243/Cys-287, Cys-256/Cys-269, Cys-273/Cys-300, Cys-305/Cys-350, Cys-336/Cys-363, Cys-368/Cys-413, Cys-399/Cys-426, Cys-431/Cys-472, and Cys-458/Cys-485. The Ca(2+) site is built by Glu-101, Asn-103, and Glu-109. A carbohydrate is bound by residues 101–109 (EPNNKQRNE), 113–118 (EIYIQR), and 126–128 (NDE). Ca(2+)-binding residues include Asn-126 and Asp-127. The region spanning 140–175 (TASCTNTSCSGHGECVETINSYTCKCHPGFLGPKCD) is the EGF-like domain. Residue Asn-145 is glycosylated (N-linked (GlcNAc...) asparagine). Sushi domains are found at residues 178–240 (VTCQ…ACHV), 241–302 (VECK…SCKA), 303–365 (VTCD…VCKA), 366–428 (SQCE…TCAG), and 429–487 (VQCS…TCEA). Residues Asn-192 and Asn-203 are each glycosylated (N-linked (GlcNAc...) asparagine). Asn-266 carries an N-linked (GlcNAc...) asparagine glycan. N-linked (GlcNAc...) asparagine glycosylation is found at Asn-313, Asn-320, and Asn-333. Asn-441 and Asn-465 each carry an N-linked (GlcNAc...) asparagine glycan. The helical transmembrane segment at 495-516 (LVVALSVAATSLLTLSSLIYVL) threads the bilayer. Residues 517 to 549 (KRFFWKKAKKFVPASSCQSLQSFENYQGPSYII) lie on the Cytoplasmic side of the membrane.

This sequence belongs to the selectin/LECAM family. In terms of assembly, interacts with SELPLG/PSGL1 and PODXL2 through the sialyl Lewis X epitope. SELPLG sulfation appears not to be required for this interaction.

Its subcellular location is the cell membrane. In terms of biological role, cell-surface glycoprotein having a role in immunoadhesion. Mediates in the adhesion of blood neutrophils in cytokine-activated endothelium through interaction with SELPLG/PSGL1. May have a role in capillary morphogenesis. In Rattus norvegicus (Rat), this protein is E-selectin (Sele).